The primary structure comprises 94 residues: U27-theraphotoxin-Cg1a (94 aa).

Residues 1–22 (MIFLLPPVIFVMLLAESVLILG) form the signal peptide. Positions 23 to 58 (DSEDADLMEMVQMSRPFFNPIIPAVEFVDLREERQR) are excised as a propeptide. Intrachain disulfides connect cysteine 60–cysteine 78, cysteine 67–cysteine 83, and cysteine 77–cysteine 88.

Belongs to the neurotoxin 14 (magi-1) family. OAIP-1 subfamily. In terms of tissue distribution, expressed by the venom gland.

The protein resides in the secreted. Its function is as follows. Probable ion channel inhibitor. In Chilobrachys guangxiensis (Chinese earth tiger tarantula), this protein is U27-theraphotoxin-Cg1a.